A 259-amino-acid polypeptide reads, in one-letter code: Bisphosphoglycerate mutase (259 aa).

The residue at position 2 (Ser2) is an N-acetylserine. Substrate-binding positions include 10 to 17 (RHGEGAWN), 23 to 24 (CS), Arg62, 89 to 92 (ERHY), Arg100, and 116 to 117 (RR). His11 serves as the catalytic Tele-phosphohistidine intermediate. Catalysis depends on Glu89, which acts as the Proton donor/acceptor. Residue Thr122 is modified to Phosphothreonine. Residue 189–190 (GN) coordinates substrate.

Belongs to the phosphoglycerate mutase family. BPG-dependent PGAM subfamily. Homodimer. In terms of tissue distribution, expressed in red blood cells.

It carries out the reaction (2R)-3-phospho-glyceroyl phosphate = (2R)-2,3-bisphosphoglycerate + H(+). The enzyme catalyses (2R)-2-phosphoglycerate = (2R)-3-phosphoglycerate. Its activity is regulated as follows. At alkaline pH BPGM favors the synthase reaction; however, at lower pH the phosphatase reaction is dominant. Inhibited by citrate. Plays a major role in regulating hemoglobin oxygen affinity by controlling the levels of its allosteric effector 2,3-bisphosphoglycerate (2,3-BPG). Also exhibits mutase (EC 5.4.2.11) activity. This is Bisphosphoglycerate mutase (BPGM) from Oryctolagus cuniculus (Rabbit).